The chain runs to 565 residues: Effector protease OspD3 (565 aa).

This sequence belongs to the Toxin_15 family.

Its subcellular location is the secreted. Effector protease that disrupts necroptosis in host cells by mediating proteolytic cleavage of host RIPK1 and RIPK3. The protein is Effector protease OspD3 of Shigella flexneri.